A 181-amino-acid chain; its full sequence is MNSRSGYIHIILGPMFSGKSTELIRLLKRYQVAMYTCLVIKYSKDERYGRGLVTHDNDSVPAIPVNSLNEINCNDINADVIGIDEGQFFPDIVEFCDYMANNGKILIVAALDGTFLRQPFGNILNLIPRAEYVLKLTAVCMICFGSASFSKRISDEQEIEIIGGKEKYQSVCRVCYFKINN.

13-20 (GPMFSGKS) contacts ATP. The Proton acceptor role is filled by E85. Residue F115 participates in substrate binding. Residues C140 and C143 each coordinate Zn(2+). 159–163 (IEIIG) contacts substrate. Zn(2+)-binding residues include C172 and C175.

This sequence belongs to the thymidine kinase family.

The catalysed reaction is thymidine + ATP = dTMP + ADP + H(+). This is Thymidine kinase (TK) from Yaba monkey tumor virus (strain VR587) (YMTV).